The primary structure comprises 187 residues: Small ribosomal subunit protein uS4 (187 aa).

The S4 RNA-binding domain maps to 105 to 174 (RRLQTLVFRK…DNHPERAKIV (70 aa)).

The protein belongs to the universal ribosomal protein uS4 family. In terms of assembly, part of the 30S ribosomal subunit. Contacts protein S5. The interaction surface between S4 and S5 is involved in control of translational fidelity.

Its function is as follows. One of the primary rRNA binding proteins, it binds directly to 16S rRNA where it nucleates assembly of the body of the 30S subunit. Functionally, with S5 and S12 plays an important role in translational accuracy. The sequence is that of Small ribosomal subunit protein uS4 from Methanocaldococcus jannaschii (strain ATCC 43067 / DSM 2661 / JAL-1 / JCM 10045 / NBRC 100440) (Methanococcus jannaschii).